The chain runs to 246 residues: Type III pantothenate kinase (246 aa).

6–13 lines the ATP pocket; that stretch reads DVGNSRIK. Substrate is bound by residues Tyr-93 and 100-103; that span reads GSDR. The Proton acceptor role is filled by Asp-102. An ATP-binding site is contributed by Thr-125. A substrate-binding site is contributed by Thr-175.

This sequence belongs to the type III pantothenate kinase family. In terms of assembly, homodimer. The cofactor is NH4(+). Requires K(+) as cofactor.

It localises to the cytoplasm. The enzyme catalyses (R)-pantothenate + ATP = (R)-4'-phosphopantothenate + ADP + H(+). Its pathway is cofactor biosynthesis; coenzyme A biosynthesis; CoA from (R)-pantothenate: step 1/5. Its function is as follows. Catalyzes the phosphorylation of pantothenate (Pan), the first step in CoA biosynthesis. The protein is Type III pantothenate kinase of Dichelobacter nodosus (strain VCS1703A).